We begin with the raw amino-acid sequence, 152 residues long: Small integral membrane protein 28 (152 aa).

The chain crosses the membrane as a helical span at residues 52 to 72 (FLCILLPATILLFLAFLLLFL). The tract at residues 117–152 (PLPPEATLPSQCLPPSYEEATRNPPGEEAQGCSPSV) is disordered.

It is found in the membrane. The sequence is that of Small integral membrane protein 28 from Homo sapiens (Human).